Consider the following 550-residue polypeptide: Spermatogenesis-associated protein 2 (550 aa).

Residues Thr-83–Ala-156 form the PUB domain. The PIM motif signature appears at Tyr-320 to Gly-337. Residues Ser-457–Gly-480 are disordered.

It belongs to the SPATA2 family.

It localises to the cytoplasm. The protein localises to the nucleus. Its function is as follows. Bridging factor that mediates the recruitment of cyld to the LUBAC complex, thereby regulating TNF-alpha-induced necroptosis. Required to activate the 'Met-1'- (linear) and 'Lys-63'-linked deubiquitinase activities of cyld. The chain is Spermatogenesis-associated protein 2 from Danio rerio (Zebrafish).